A 479-amino-acid polypeptide reads, in one-letter code: Transcription factor CP2-like protein 1 (479 aa).

Residues 43–280 enclose the Grh/CP2 DB domain; sequence RLPPLQYVLC…PSPSYNGSPN (238 aa). 2 disordered regions span residues 219–245 and 271–301; these read KPKGADRKQKTDREKMEKRTAQEKEKY and PSPSYNGSPNSFGLGEGNASPTHPVEALPVG. Positions 221-245 are enriched in basic and acidic residues; sequence KGADRKQKTDREKMEKRTAQEKEKY. Positions 261 to 365 are SAM2-like domain; it reads PDVAYQVNSA…IRLFNAIKGR (105 aa). Residues 271–281 show a composition bias toward polar residues; it reads PSPSYNGSPNS.

The protein belongs to the grh/CP2 family. CP2 subfamily. In terms of assembly, forms homohexamers via its SAM-like domain. Interacts with MTA1; which is indispensable for TFCP2l1-mediated self-renewal-promoting effect and endoderm-inhibiting action. Highly expressed in placental JEG-3 cells and very low levels of expression in non-steroidogenic cells. No expression was seen in adrenal NCI-H295A cells or in adrenal tissue.

It localises to the nucleus. Transcription factor that facilitates establishment and maintenance of pluripotency in embryonic stem cells (ESCs). With KLF2, acts as the major effector of self-renewal that mediates induction of pluripotency downstream of LIF/STAT3 and Wnt/beta-catenin signaling. Required for normal duct development in the salivary gland and kidney. Coordinates the development of the kidney collecting ducts intercalated (IC) and principal (PC) cells, which regulate acid-base and salt-water homeostasis, respectively. Regulates the expression of IC genes including subunits B1 and D2 of the V-ATPase complex, OXGR1, CA12, SLC4A1, AQP6 and IC-specific transcription factor FOXI1. Also regulates the expression of JAG1 and subsequent notch signaling in the collecting duct. JAG1 initiates notch signaling in PCs but inhibits notch signaling in ICs. Acts as a transcriptional suppressor that may suppress UBP1-mediated transcriptional activation. Modulates the placental expression of CYP11A1. This is Transcription factor CP2-like protein 1 (TFCP2L1) from Homo sapiens (Human).